A 285-amino-acid polypeptide reads, in one-letter code: MRREQQLPAAVAAPVADGGQLMRAVDLTLGFGPKTVLEQVSLDFPARSVTTLLGPTGSGKTTFLRTLNRMNDKVSGFRHSGDVLLGGRTIFADRDLMEFRRSVGMLFQRPNPFPMSIMDNVVAGVRAHKMAPRKQFKTVAEARLTEVGLWDAVKDRLGDSPFRLSGGQQQLLCLARALAVNPDVLLLDEPTSSLDPTTTEKIEGLIRSLADRLTVIMVTHDLAQAARTGDRTAFFFEGRLVEEGPTKHLFLSPQHEETVRYFAPFRPAQGSDRGSSQTAGVAESQ.

An ABC transporter domain is found at M22–F262. Residue G54–T61 participates in ATP binding. The disordered stretch occupies residues R266–Q285. Residues D272–Q285 show a composition bias toward polar residues.

Belongs to the ABC transporter superfamily. Phosphate importer (TC 3.A.1.7) family. As to quaternary structure, the complex is composed of two ATP-binding proteins (PstB), two transmembrane proteins (PstC and PstA) and a solute-binding protein (PstS).

Its subcellular location is the cell membrane. The catalysed reaction is phosphate(out) + ATP + H2O = ADP + 2 phosphate(in) + H(+). Functionally, part of the ABC transporter complex PstSACB involved in phosphate import. Responsible for energy coupling to the transport system. This is Phosphate import ATP-binding protein PstB from Mycobacterium intracellulare.